The chain runs to 635 residues: Protein MICRORCHIDIA 1 (635 aa).

The segment at 491–511 (RTVIPDQPPTVNTYNPSPLPS) is disordered. The stretch at 588–635 (MRCEEYVKKENEVEQTVKSLEKELEEIKSKCAQLALLVDAKKKEMQQV) forms a coiled coil.

This sequence belongs to the MORC ATPase protein family. As to quaternary structure, homodimer and heterodimer with MORC6. Component of an RNA-directed DNA methylation (RdDM) complex that contains at least MORC6, MORC1/CRT1, MORC2, SWI3D and SUVH9. Binds directly to SUVH2 and SUVH9. Interacts with the resistance proteins RCY1, RPM1, SNC1, RPP8, SSI4 and RPS2. The interactions with various resistance proteins are disrupted when these resistance proteins are activated. Interacts with the PAMP recognition receptor FLS2. The cofactor is Mg(2+). It depends on Mn(2+) as a cofactor. In terms of tissue distribution, expressed constitutively.

It localises to the nucleus. It is found in the endosome. Its function is as follows. Mediator of defense signaling triggered by distinct classes of R proteins. Required during hypersensitive response (HR) that confers disease resistance to turnip crinkle virus (TCV). Exhibits ATPase activity. Contributes to resistance against Pseudomonas syringae and Hyaloperonospora arabidopsidis, at early stages prior to cytosolic calcium ions Ca(2+) accumulation. Required for pathogen-associated molecular pattern (PAMP)-triggered immunity (PTI), basal resistance, non-host resistance and systemic acquired resistance (SAR). Binds DNA/RNA in a non-specific manner and exhibits endonuclease activity. Probably involved in DNA repair. Required for both RPP8- and SSI4-mediated resistance responses, thus being involved in both TIR- and CC-NB-LRR pathways. Involved in RNA-directed DNA methylation (RdDM) as a component of the RdDM machinery and required for gene silencing. May also be involved in the regulation of chromatin architecture to maintain gene silencing. This Arabidopsis thaliana (Mouse-ear cress) protein is Protein MICRORCHIDIA 1.